Here is a 307-residue protein sequence, read N- to C-terminus: Elongation factor Ts, mitochondrial (307 aa).

The N-terminal 19 residues, 1–19 (MIFTRLTRFVGHGTGLRLY), are a transit peptide targeting the mitochondrion.

This sequence belongs to the EF-Ts family.

The protein localises to the mitochondrion. Its function is as follows. Associates with the EF-Tu.GDP complex and induces the exchange of GDP to GTP. It remains bound to the aminoacyl-tRNA.EF-Tu.GTP complex up to the GTP hydrolysis stage on the ribosome. In Aedes aegypti (Yellowfever mosquito), this protein is Elongation factor Ts, mitochondrial.